Consider the following 352-residue polypeptide: tRNA pseudouridine synthase D (352 aa).

Asp-81 (nucleophile) is an active-site residue. Residues 157–303 (GVPNYFGLQR…MAHERRILRL (147 aa)) form the TRUD domain.

This sequence belongs to the pseudouridine synthase TruD family.

The enzyme catalyses uridine(13) in tRNA = pseudouridine(13) in tRNA. Responsible for synthesis of pseudouridine from uracil-13 in transfer RNAs. The protein is tRNA pseudouridine synthase D of Ectopseudomonas mendocina (strain ymp) (Pseudomonas mendocina).